The chain runs to 937 residues: Isoleucine--tRNA ligase (937 aa).

Positions 58 to 68 (PYANGSIHIGH) match the 'HIGH' region motif. E561 contributes to the L-isoleucyl-5'-AMP binding site. The short motif at 602–606 (KMSKS) is the 'KMSKS' region element. K605 contributes to the ATP binding site. Residues C900, C903, C920, and C923 each contribute to the Zn(2+) site.

This sequence belongs to the class-I aminoacyl-tRNA synthetase family. IleS type 1 subfamily. Monomer. Zn(2+) serves as cofactor.

The protein resides in the cytoplasm. It catalyses the reaction tRNA(Ile) + L-isoleucine + ATP = L-isoleucyl-tRNA(Ile) + AMP + diphosphate. Catalyzes the attachment of isoleucine to tRNA(Ile). As IleRS can inadvertently accommodate and process structurally similar amino acids such as valine, to avoid such errors it has two additional distinct tRNA(Ile)-dependent editing activities. One activity is designated as 'pretransfer' editing and involves the hydrolysis of activated Val-AMP. The other activity is designated 'posttransfer' editing and involves deacylation of mischarged Val-tRNA(Ile). In Pectobacterium atrosepticum (strain SCRI 1043 / ATCC BAA-672) (Erwinia carotovora subsp. atroseptica), this protein is Isoleucine--tRNA ligase.